Consider the following 382-residue polypeptide: ATP phosphoribosyltransferase regulatory subunit (382 aa).

This sequence belongs to the class-II aminoacyl-tRNA synthetase family. HisZ subfamily. As to quaternary structure, heteromultimer composed of HisG and HisZ subunits.

Its subcellular location is the cytoplasm. It participates in amino-acid biosynthesis; L-histidine biosynthesis; L-histidine from 5-phospho-alpha-D-ribose 1-diphosphate: step 1/9. Required for the first step of histidine biosynthesis. May allow the feedback regulation of ATP phosphoribosyltransferase activity by histidine. This is ATP phosphoribosyltransferase regulatory subunit from Burkholderia thailandensis (strain ATCC 700388 / DSM 13276 / CCUG 48851 / CIP 106301 / E264).